Consider the following 220-residue polypeptide: Peptide methionine sulfoxide reductase MsrA (220 aa).

Residue C54 is part of the active site.

This sequence belongs to the MsrA Met sulfoxide reductase family.

It catalyses the reaction L-methionyl-[protein] + [thioredoxin]-disulfide + H2O = L-methionyl-(S)-S-oxide-[protein] + [thioredoxin]-dithiol. The enzyme catalyses [thioredoxin]-disulfide + L-methionine + H2O = L-methionine (S)-S-oxide + [thioredoxin]-dithiol. Its function is as follows. Has an important function as a repair enzyme for proteins that have been inactivated by oxidation. Catalyzes the reversible oxidation-reduction of methionine sulfoxide in proteins to methionine. This is Peptide methionine sulfoxide reductase MsrA from Salinispora tropica (strain ATCC BAA-916 / DSM 44818 / JCM 13857 / NBRC 105044 / CNB-440).